The following is a 247-amino-acid chain: uncharacterized protein (247 aa).

A signal peptide spans 1-35 (MWGPGVTAEGLSVAPAPPPLLPLLLLLALALVAPS). Residue Asn-57 is glycosylated (N-linked (GlcNAc...) asparagine). Residues 82 to 102 (LSGLLILLVLFAIGYFLQRII) traverse the membrane as a helical segment. A disordered region spans residues 109–179 (YPRGQARPGQ…GGRSDPSCAS (71 aa)). Residues 160 to 172 (SGGGGRGRGGGGR) show a composition bias toward gly residues.

The protein localises to the membrane. This is an uncharacterized protein from Homo sapiens (Human).